The sequence spans 519 residues: Polyamine aminopropyltransferase (519 aa).

A run of 7 helical transmembrane segments spans residues 17–37, 53–73, 86–106, 109–129, 158–178, 180–200, and 208–228; these read LLLVSVAICAASGLVYELALV, LIVAGYVAALGVGAILVKPFL, LLGLIGGLSALVLYMTFAVVG, LWMLVLATALIGILVGAELPL, LGALLGGLAWPFILLPWLGMM, GAAAAGMINLLAALFVGCVLL, and QFIRAVVALLVAIAVLGTVLV. The segment at 200 to 463 is spermidine synthase; sequence LRHLLPRAQF…FQLCGPEGTE (264 aa). In terms of domain architecture, PABS spans 225 to 459; sequence TVLVRSDGIV…GDWGFQLCGP (235 aa). Q255 lines the S-methyl-5'-thioadenosine pocket. D307 serves as a coordination point for spermidine. S-methyl-5'-thioadenosine contacts are provided by residues E326 and 358–359; that span reads DA. D379 acts as the Proton acceptor in catalysis.

Belongs to the spermidine/spermine synthase family. In terms of assembly, homodimer or homotetramer.

Its subcellular location is the cell membrane. It carries out the reaction S-adenosyl 3-(methylsulfanyl)propylamine + putrescine = S-methyl-5'-thioadenosine + spermidine + H(+). Its pathway is amine and polyamine biosynthesis; spermidine biosynthesis; spermidine from putrescine: step 1/1. Functionally, catalyzes the irreversible transfer of a propylamine group from the amino donor S-adenosylmethioninamine (decarboxy-AdoMet) to putrescine (1,4-diaminobutane) to yield spermidine. In Corynebacterium efficiens (strain DSM 44549 / YS-314 / AJ 12310 / JCM 11189 / NBRC 100395), this protein is Polyamine aminopropyltransferase.